A 111-amino-acid polypeptide reads, in one-letter code: N-alpha-acetyltransferase 38-B, NatC auxiliary subunit (111 aa).

The region spanning 28-106 (TARHKLESLL…IVSIQVELET (79 aa)) is the Sm domain.

The protein belongs to the snRNP Sm proteins family. Component of the N-terminal acetyltransferase C (NatC) complex, which is composed of naa35, naa38 and naa30.

The protein resides in the cytoplasm. In terms of biological role, auxillary component of the N-terminal acetyltransferase C (NatC) complex which catalyzes acetylation of N-terminal methionine residues. The sequence is that of N-alpha-acetyltransferase 38-B, NatC auxiliary subunit (naa38-b) from Xenopus laevis (African clawed frog).